The following is a 161-amino-acid chain: Respiratory growth induced protein 1 (161 aa).

A Glycyl lysine isopeptide (Lys-Gly) (interchain with G-Cter in ubiquitin) cross-link involves residue Lys68.

This sequence belongs to the RGI1 family.

It localises to the cell membrane. Its function is as follows. Involved in the control of energetic metabolism and significantly contribute to cell fitness, especially under respiratory growth conditions. This is Respiratory growth induced protein 1 (RGI1) from Saccharomyces cerevisiae (strain RM11-1a) (Baker's yeast).